We begin with the raw amino-acid sequence, 417 residues long: Tyrosine--tRNA ligase (417 aa).

Tyrosine 39 contacts L-tyrosine. A 'HIGH' region motif is present at residues 44 to 53 (PTAPSLHAGG). L-tyrosine is bound by residues tyrosine 176 and glutamine 180. Positions 236 to 240 (KMGKS) match the 'KMSKS' region motif. Lysine 239 is a binding site for ATP. In terms of domain architecture, S4 RNA-binding spans 350–417 (IGVLALMVLA…KKRHVLIRPA (68 aa)).

It belongs to the class-I aminoacyl-tRNA synthetase family. TyrS type 1 subfamily. In terms of assembly, homodimer.

Its subcellular location is the cytoplasm. It catalyses the reaction tRNA(Tyr) + L-tyrosine + ATP = L-tyrosyl-tRNA(Tyr) + AMP + diphosphate + H(+). Catalyzes the attachment of tyrosine to tRNA(Tyr) in a two-step reaction: tyrosine is first activated by ATP to form Tyr-AMP and then transferred to the acceptor end of tRNA(Tyr). The chain is Tyrosine--tRNA ligase from Brucella abortus (strain 2308).